Consider the following 154-residue polypeptide: Transcriptional repressor NrdR (154 aa).

Positions 1–22 are disordered; sequence MECPNCHKNASRVIDSRPSDEN. A zinc finger spans residues 3-34; that stretch reads CPNCHKNASRVIDSRPSDENRAIRRRRECENC. The ATP-cone domain maps to 49-139; the sequence is LLVIKNDGTR…IYRQFKDVSG (91 aa).

It belongs to the NrdR family. Zn(2+) serves as cofactor.

In terms of biological role, negatively regulates transcription of bacterial ribonucleotide reductase nrd genes and operons by binding to NrdR-boxes. In Lactobacillus gasseri (strain ATCC 33323 / DSM 20243 / BCRC 14619 / CIP 102991 / JCM 1131 / KCTC 3163 / NCIMB 11718 / NCTC 13722 / AM63), this protein is Transcriptional repressor NrdR.